The primary structure comprises 462 residues: Cytochrome P450 20A1 (462 aa).

Residues 4-24 (FAIFAVTFLLALVGAVLYLYP) form a helical membrane-spanning segment. Cys409 is a binding site for heme.

The protein belongs to the cytochrome P450 family. It depends on heme as a cofactor.

The protein resides in the membrane. The chain is Cytochrome P450 20A1 (CYP20A1) from Bos taurus (Bovine).